Here is a 343-residue protein sequence, read N- to C-terminus: Glycerol-3-phosphate dehydrogenase [NAD(P)+] (343 aa).

The NADPH site is built by tryptophan 29, arginine 49, and lysine 122. 3 residues coordinate sn-glycerol 3-phosphate: lysine 122, glycine 150, and serine 152. Alanine 154 serves as a coordination point for NADPH. Sn-glycerol 3-phosphate contacts are provided by lysine 205, aspartate 258, serine 268, arginine 269, and asparagine 270. Lysine 205 (proton acceptor) is an active-site residue. NADPH is bound at residue arginine 269. Residues leucine 288 and glutamate 290 each coordinate NADPH.

This sequence belongs to the NAD-dependent glycerol-3-phosphate dehydrogenase family.

It is found in the cytoplasm. It carries out the reaction sn-glycerol 3-phosphate + NAD(+) = dihydroxyacetone phosphate + NADH + H(+). It catalyses the reaction sn-glycerol 3-phosphate + NADP(+) = dihydroxyacetone phosphate + NADPH + H(+). Its pathway is membrane lipid metabolism; glycerophospholipid metabolism. Functionally, catalyzes the reduction of the glycolytic intermediate dihydroxyacetone phosphate (DHAP) to sn-glycerol 3-phosphate (G3P), the key precursor for phospholipid synthesis. This is Glycerol-3-phosphate dehydrogenase [NAD(P)+] from Mesorhizobium japonicum (strain LMG 29417 / CECT 9101 / MAFF 303099) (Mesorhizobium loti (strain MAFF 303099)).